A 119-amino-acid polypeptide reads, in one-letter code: MMRRYRRKNSSIPIIVEGRNDLASLRKLSFYGEIIVFNRGISITSFSDEISNKYREVIILTDFDNKGSFLKDRFYGYLTGMGVYVDLYLWNFIRKHVPIRTVEELPAEFEREVEKEIQM.

The 83-residue stretch at 11-93 (SIPIIVEGRN…YVDLYLWNFI (83 aa)) folds into the Toprim domain. Residues Glu17, Asp62, and Asp64 each coordinate Mg(2+).

Belongs to the UPF0292 family. The cofactor is Mg(2+).

The protein is UPF0292 protein TV1259 of Thermoplasma volcanium (strain ATCC 51530 / DSM 4299 / JCM 9571 / NBRC 15438 / GSS1).